The following is a 513-amino-acid chain: Bifunctional purine biosynthesis protein PurH (513 aa).

Positions 1–146 (MPRFALLSVS…KNHAHLTILT (146 aa)) constitute an MGS-like domain.

It belongs to the PurH family.

It catalyses the reaction (6R)-10-formyltetrahydrofolate + 5-amino-1-(5-phospho-beta-D-ribosyl)imidazole-4-carboxamide = 5-formamido-1-(5-phospho-D-ribosyl)imidazole-4-carboxamide + (6S)-5,6,7,8-tetrahydrofolate. It carries out the reaction IMP + H2O = 5-formamido-1-(5-phospho-D-ribosyl)imidazole-4-carboxamide. It participates in purine metabolism; IMP biosynthesis via de novo pathway; 5-formamido-1-(5-phospho-D-ribosyl)imidazole-4-carboxamide from 5-amino-1-(5-phospho-D-ribosyl)imidazole-4-carboxamide (10-formyl THF route): step 1/1. The protein operates within purine metabolism; IMP biosynthesis via de novo pathway; IMP from 5-formamido-1-(5-phospho-D-ribosyl)imidazole-4-carboxamide: step 1/1. The polypeptide is Bifunctional purine biosynthesis protein PurH (Synechococcus elongatus (strain ATCC 33912 / PCC 7942 / FACHB-805) (Anacystis nidulans R2)).